Consider the following 158-residue polypeptide: Urease subunit beta (158 aa).

A disordered region spans residues 113 to 158 (EDDWRRSSAAGDAPQELPQVEAAERGRKLDEATDVGTEDTPEEGQN). Residues 134 to 143 (AAERGRKLDE) show a composition bias toward basic and acidic residues. Over residues 144-158 (ATDVGTEDTPEEGQN) the composition is skewed to acidic residues.

It belongs to the urease beta subunit family. Heterotrimer of UreA (gamma), UreB (beta) and UreC (alpha) subunits. Three heterotrimers associate to form the active enzyme.

The protein localises to the cytoplasm. It carries out the reaction urea + 2 H2O + H(+) = hydrogencarbonate + 2 NH4(+). Its pathway is nitrogen metabolism; urea degradation; CO(2) and NH(3) from urea (urease route): step 1/1. The sequence is that of Urease subunit beta from Corynebacterium glutamicum (strain R).